A 456-amino-acid polypeptide reads, in one-letter code: Glycerol-3-phosphate acyltransferase 4 (456 aa).

An N-terminal signal peptide occupies residues 1–37 (MFLLLPFDSLIVNLLGISLTVLFTLLLVFIIVPAIFG). The next 2 helical transmembrane spans lie at 156–176 (ISLR…CFLL) and 180–200 (IALA…VGYL). Residue Asn247 is glycosylated (N-linked (GlcNAc...) asparagine). The short motif at 248–253 (HTSPID) is the HXXXXD motif element. N-linked (GlcNAc...) asparagine glycosylation is found at Asn327, Asn328, and Asn362.

It belongs to the 1-acyl-sn-glycerol-3-phosphate acyltransferase family. In terms of tissue distribution, highly expressed in testis.

Its subcellular location is the endoplasmic reticulum membrane. The enzyme catalyses sn-glycerol 3-phosphate + an acyl-CoA = a 1-acyl-sn-glycero-3-phosphate + CoA. It catalyses the reaction dodecanoyl-CoA + sn-glycerol 3-phosphate = 1-dodecanoyl-sn-glycerol 3-phosphate + CoA. The catalysed reaction is sn-glycerol 3-phosphate + hexadecanoyl-CoA = 1-hexadecanoyl-sn-glycero-3-phosphate + CoA. It carries out the reaction sn-glycerol 3-phosphate + octadecanoyl-CoA = 1-octadecanoyl-sn-glycero-3-phosphate + CoA. The enzyme catalyses sn-glycerol 3-phosphate + (9Z)-octadecenoyl-CoA = 1-(9Z-octadecenoyl)-sn-glycero-3-phosphate + CoA. It catalyses the reaction (9Z,12Z)-octadecadienoyl-CoA + sn-glycerol 3-phosphate = 1-(9Z,12Z)-octadecadienoyl-sn-glycero-3-phosphate + CoA. Its pathway is phospholipid metabolism; CDP-diacylglycerol biosynthesis; CDP-diacylglycerol from sn-glycerol 3-phosphate: step 1/3. Its function is as follows. Converts glycerol-3-phosphate to 1-acyl-sn-glycerol-3-phosphate (lysophosphatidic acid or LPA) by incorporating an acyl moiety at the sn-1 position of the glycerol backbone. Active against both saturated and unsaturated long-chain fatty acyl-CoAs. Protects cells against lipotoxicity. In Mus musculus (Mouse), this protein is Glycerol-3-phosphate acyltransferase 4.